The primary structure comprises 212 residues: Protein-L-isoaspartate O-methyltransferase (212 aa).

Serine 60 is a catalytic residue.

The protein belongs to the methyltransferase superfamily. L-isoaspartyl/D-aspartyl protein methyltransferase family.

The protein localises to the cytoplasm. It carries out the reaction [protein]-L-isoaspartate + S-adenosyl-L-methionine = [protein]-L-isoaspartate alpha-methyl ester + S-adenosyl-L-homocysteine. Functionally, catalyzes the methyl esterification of L-isoaspartyl residues in peptides and proteins that result from spontaneous decomposition of normal L-aspartyl and L-asparaginyl residues. It plays a role in the repair and/or degradation of damaged proteins. The polypeptide is Protein-L-isoaspartate O-methyltransferase (Methanococcus maripaludis (strain DSM 14266 / JCM 13030 / NBRC 101832 / S2 / LL)).